Consider the following 528-residue polypeptide: Probable serine/threonine-protein kinase 380R (528 aa).

The interval 70 to 96 (VKIPKSKSPPKVKSPKRKKSPVRRRVS) is disordered. Basic residues predominate over residues 73 to 95 (PKSKSPPKVKSPKRKKSPVRRRV). The Protein kinase domain occupies 156–507 (FTNVKAVGKG…LANVLIHKIF (352 aa)). Residues 162–170 (VGKGSFGTV) and Lys-187 each bind ATP. Asp-302 (proton acceptor) is an active-site residue.

It belongs to the protein kinase superfamily. Ser/Thr protein kinase family.

It carries out the reaction L-seryl-[protein] + ATP = O-phospho-L-seryl-[protein] + ADP + H(+). The catalysed reaction is L-threonyl-[protein] + ATP = O-phospho-L-threonyl-[protein] + ADP + H(+). In Invertebrate iridescent virus 6 (IIV-6), this protein is Probable serine/threonine-protein kinase 380R.